A 327-amino-acid chain; its full sequence is Undecaprenyl-phosphate 4-deoxy-4-formamido-L-arabinose transferase (327 aa).

At 1–235 the chain is on the cytoplasmic side; that stretch reads MFDAAPIKKV…TCLTTTPLRL (235 aa). Residues 236–256 form a helical membrane-spanning segment; it reads LSLLGSVIAIGGFSLSVLLIV. At 257 to 269 the chain is on the periplasmic side; that stretch reads LRLALGPQWAAEG. The helical transmembrane segment at 270–290 threads the bilayer; the sequence is VFMLFAVLFTFIGAQFIGMGL. Over 291–327 the chain is Cytoplasmic; that stretch reads LGEYIGRIYNDVRARPRYFVQQVIYPESTPFTEESHQ.

Belongs to the glycosyltransferase 2 family.

The protein localises to the cell inner membrane. It catalyses the reaction UDP-4-deoxy-4-formamido-beta-L-arabinose + di-trans,octa-cis-undecaprenyl phosphate = 4-deoxy-4-formamido-alpha-L-arabinopyranosyl di-trans,octa-cis-undecaprenyl phosphate + UDP. The protein operates within glycolipid biosynthesis; 4-amino-4-deoxy-alpha-L-arabinose undecaprenyl phosphate biosynthesis; 4-amino-4-deoxy-alpha-L-arabinose undecaprenyl phosphate from UDP-4-deoxy-4-formamido-beta-L-arabinose and undecaprenyl phosphate: step 1/2. Its pathway is bacterial outer membrane biogenesis; lipopolysaccharide biosynthesis. Catalyzes the transfer of 4-deoxy-4-formamido-L-arabinose from UDP to undecaprenyl phosphate. The modified arabinose is attached to lipid A and is required for resistance to polymyxin and cationic antimicrobial peptides. The chain is Undecaprenyl-phosphate 4-deoxy-4-formamido-L-arabinose transferase from Salmonella choleraesuis (strain SC-B67).